Here is a 395-residue protein sequence, read N- to C-terminus: Probable beta-1,3-galactosyltransferase 8 (395 aa).

The chain crosses the membrane as a helical; Signal-anchor for type II membrane protein span at residues 5–27; sequence AASGKAIIVLCLASFLAGSLFMS. N-linked (GlcNAc...) asparagine glycosylation is present at Asn117.

The protein belongs to the glycosyltransferase 31 family. It depends on Mn(2+) as a cofactor.

It is found in the golgi apparatus membrane. It participates in protein modification; protein glycosylation. Functionally, beta-1,3-galactosyltransferase that transfers galactose from UDP-galactose to substrates with a terminal glycosyl residue. In Arabidopsis thaliana (Mouse-ear cress), this protein is Probable beta-1,3-galactosyltransferase 8 (B3GALT8).